Consider the following 434-residue polypeptide: Cobyrinate a,c-diamide synthase (434 aa).

Residues 240-430 (KAYVAYDSAF…SHFHFSRTRR (191 aa)) form the GATase cobBQ-type domain. Cysteine 322 acts as the Nucleophile in catalysis.

This sequence belongs to the CobB/CbiA family. The cofactor is Mg(2+).

It catalyses the reaction cob(II)yrinate + 2 L-glutamine + 2 ATP + 2 H2O = cob(II)yrinate a,c diamide + 2 L-glutamate + 2 ADP + 2 phosphate + 2 H(+). Its pathway is cofactor biosynthesis; adenosylcobalamin biosynthesis; cob(II)yrinate a,c-diamide from sirohydrochlorin (anaerobic route): step 10/10. Catalyzes the ATP-dependent amidation of the two carboxylate groups at positions a and c of cobyrinate, using either L-glutamine or ammonia as the nitrogen source. The sequence is that of Cobyrinate a,c-diamide synthase from Sulfolobus acidocaldarius (strain ATCC 33909 / DSM 639 / JCM 8929 / NBRC 15157 / NCIMB 11770).